The following is a 785-amino-acid chain: Cadherin-7 (785 aa).

The first 27 residues, 1–27 (MKLGKVELCHFLQLIALFLCFSGMSQA), serve as a signal peptide directing secretion. A propeptide spanning residues 28–47 (ELPRSRSKPYFQSGRSRTKR) is cleaved from the precursor. The Extracellular segment spans residues 28–607 (ELPRSRSKPY…AYVLPAGLST (580 aa)). Cadherin domains are found at residues 49–153 (WVWN…EPKF), 154–262 (LDGP…PPRF), 263–377 (PRRS…PPVF), 378–482 (SSPL…APEF), and 482–599 (FAMD…AEAY). N-linked (GlcNAc...) asparagine glycans are attached at residues asparagine 449 and asparagine 530. The helical transmembrane segment at 608–628 (GALIAILACVLTLLVLILLIV) threads the bilayer. Topologically, residues 629–785 (TMRRRKKEPL…YGNGQESLYS (157 aa)) are cytoplasmic.

It is found in the cell membrane. Functionally, cadherins are calcium-dependent cell adhesion proteins. They preferentially interact with themselves in a homophilic manner in connecting cells; cadherins may thus contribute to the sorting of heterogeneous cell types. The protein is Cadherin-7 (Cdh7) of Mus musculus (Mouse).